The sequence spans 318 residues: NADH-quinone oxidoreductase subunit H 2 (318 aa).

9 consecutive transmembrane segments (helical) span residues 4-24 (LLIALFSLILLLALLGAAGVF), 77-97 (LAPALAAFPMLAGFGVVAFAP), 106-126 (VGVLFVMGMLALTVWALVLGA), 146-166 (LAYESFLGLSLMGCVLLAGSF), 179-199 (LWFILLQPLGAALFFLAGLAA), 214-234 (LVAGFMTEYSGMSFALFFLGE), 238-258 (ILLVAALFTTLFLGGWAGPIL), 262-282 (VWFGLKVAAISVVFVWLRAAL), and 293-313 (FAWKVALPLALLNLLVTAWIA).

It belongs to the complex I subunit 1 family. NDH-1 is composed of 14 different subunits. Subunits NuoA, H, J, K, L, M, N constitute the membrane sector of the complex.

The protein resides in the cell inner membrane. The enzyme catalyses a quinone + NADH + 5 H(+)(in) = a quinol + NAD(+) + 4 H(+)(out). Functionally, NDH-1 shuttles electrons from NADH, via FMN and iron-sulfur (Fe-S) centers, to quinones in the respiratory chain. The immediate electron acceptor for the enzyme in this species is believed to be ubiquinone. Couples the redox reaction to proton translocation (for every two electrons transferred, four hydrogen ions are translocated across the cytoplasmic membrane), and thus conserves the redox energy in a proton gradient. This subunit may bind ubiquinone. The polypeptide is NADH-quinone oxidoreductase subunit H 2 (Cereibacter sphaeroides (strain ATCC 17029 / ATH 2.4.9) (Rhodobacter sphaeroides)).